The sequence spans 475 residues: Aspartyl/glutamyl-tRNA(Asn/Gln) amidotransferase subunit B (475 aa).

The protein belongs to the GatB/GatE family. GatB subfamily. In terms of assembly, heterotrimer of A, B and C subunits.

It carries out the reaction L-glutamyl-tRNA(Gln) + L-glutamine + ATP + H2O = L-glutaminyl-tRNA(Gln) + L-glutamate + ADP + phosphate + H(+). It catalyses the reaction L-aspartyl-tRNA(Asn) + L-glutamine + ATP + H2O = L-asparaginyl-tRNA(Asn) + L-glutamate + ADP + phosphate + 2 H(+). Allows the formation of correctly charged Asn-tRNA(Asn) or Gln-tRNA(Gln) through the transamidation of misacylated Asp-tRNA(Asn) or Glu-tRNA(Gln) in organisms which lack either or both of asparaginyl-tRNA or glutaminyl-tRNA synthetases. The reaction takes place in the presence of glutamine and ATP through an activated phospho-Asp-tRNA(Asn) or phospho-Glu-tRNA(Gln). The chain is Aspartyl/glutamyl-tRNA(Asn/Gln) amidotransferase subunit B from Caldanaerobacter subterraneus subsp. tengcongensis (strain DSM 15242 / JCM 11007 / NBRC 100824 / MB4) (Thermoanaerobacter tengcongensis).